A 340-amino-acid polypeptide reads, in one-letter code: Putative methionyl-tRNA formyltransferase (340 aa).

It belongs to the Fmt family.

It is found in the mitochondrion. Its subcellular location is the mitochondrion matrix. The protein resides in the cytoplasm. The catalysed reaction is L-methionyl-tRNA(fMet) + (6R)-10-formyltetrahydrofolate = N-formyl-L-methionyl-tRNA(fMet) + (6S)-5,6,7,8-tetrahydrofolate + H(+). Its function is as follows. Formylates methionyl-tRNA in mitochondria and the cytoplasm. Responsible for the formylation of the N-terminally formylated (Nt-formylated) mitochondrial matrix proteins that are encoded by mitochondrial DNA. Nt-formylated proteins in the cytoplasm are strongly up-regulated in stationary phase or upon starvation for specific amino acids and are targeted for degradation by an E3 ubiquitin ligase-mediated fMet/N-end rule pathway. Increased Nt-formylation of cytosolic proteins appears to be important for adaptation to these stresses. The polypeptide is Putative methionyl-tRNA formyltransferase (fmt1) (Schizosaccharomyces pombe (strain 972 / ATCC 24843) (Fission yeast)).